A 255-amino-acid chain; its full sequence is Tabinhibitin 7 (255 aa).

The first 23 residues, 1–23, serve as a signal peptide directing secretion; the sequence is MTSILVSSFLLATLVLQYATIDA. The Cell attachment site signature appears at 32-34; that stretch reads RGD. The region spanning 67–211 is the SCP domain; sequence LSKINDVRDH…KARALLTCNF (145 aa).

This sequence belongs to the CRISP family. In terms of tissue distribution, expressed in salivary glands.

The protein resides in the secreted. Inhibits platelet aggregation induced by all agonists tested (ADP, arachidonic acid, the thromboxane A2 analog U46619, thrombin, and snake venom snaclecs (TMVA that activates platelet through GPIB, and stejnulxin that specifically acts through GPVI (GP6))). May act by competing with fibrinogen for binding to glycoprotein IIb/IIIa (ITGA2B/ITGB3). In Tabanus yao (Horsefly), this protein is Tabinhibitin 7.